We begin with the raw amino-acid sequence, 333 residues long: Transaldolase (333 aa).

The Schiff-base intermediate with substrate role is filled by K135.

It belongs to the transaldolase family. Type 1 subfamily. As to quaternary structure, homodimer.

Its subcellular location is the cytoplasm. The catalysed reaction is D-sedoheptulose 7-phosphate + D-glyceraldehyde 3-phosphate = D-erythrose 4-phosphate + beta-D-fructose 6-phosphate. It participates in carbohydrate degradation; pentose phosphate pathway; D-glyceraldehyde 3-phosphate and beta-D-fructose 6-phosphate from D-ribose 5-phosphate and D-xylulose 5-phosphate (non-oxidative stage): step 2/3. In terms of biological role, transaldolase is important for the balance of metabolites in the pentose-phosphate pathway. This is Transaldolase from Prochlorococcus marinus subsp. pastoris (strain CCMP1986 / NIES-2087 / MED4).